The chain runs to 283 residues: Coiled-coil domain-containing protein 107 (283 aa).

An N-terminal signal peptide occupies residues 1–24 (MAGAVSLLGVVGLLLVSALSGVLG). The interval 30-62 (DLRAHPGNAAHPGSGATEPRRRPPLKDQRERTR) is disordered. Over residues 47-62 (EPRRRPPLKDQRERTR) the composition is skewed to basic and acidic residues. Residues 65–85 (SLPLGALYTAAVAAFVLYKCL) traverse the membrane as a helical segment. Residues 104–134 (LQSEQQLAQLTQQLAQTEQHLNNLMAQLDPL) are a coiled coil. 2 disordered regions span residues 164–207 (KPDK…SRPL) and 258–283 (AKGP…SLFS). A compositionally biased stretch (gly residues) spans 176 to 187 (EGSGGESAGGGD).

It is found in the membrane. This chain is Coiled-coil domain-containing protein 107 (CCDC107), found in Homo sapiens (Human).